A 506-amino-acid polypeptide reads, in one-letter code: Cytochrome P450 6a8 (506 aa).

Position 451 (Cys-451) interacts with heme.

The protein belongs to the cytochrome P450 family. The cofactor is heme.

The protein resides in the endoplasmic reticulum membrane. It localises to the microsome membrane. Functionally, involved in the metabolism of insect hormones and in the breakdown of synthetic insecticides. This chain is Cytochrome P450 6a8 (Cyp6a8), found in Drosophila melanogaster (Fruit fly).